We begin with the raw amino-acid sequence, 956 residues long: Zinc fingers and homeoboxes protein 3 (956 aa).

Residues 1 to 107 (MASKRKSTTP…SEHTDFNKDP (107 aa)) are required for nuclear localization. A disordered region spans residues 22–66 (DASMEAQPAETLPEGPQQDLPPEASAASSEAAQNPSSTDGSTLAN). Over residues 42–58 (PPEASAASSEAAQNPSS) the composition is skewed to low complexity. 2 consecutive C2H2-type zinc fingers follow at residues 77 to 100 (YSCK…NSEH) and 109 to 132 (FVCS…ATCH). The tract at residues 242-488 (ASASSAKNPH…LLTACPSITS (247 aa)) is required for homodimerization and interaction with NFYA. Positions 303–502 (LSSIPTYNAA…DASIYKNKKS (200 aa)) are required for repressor activity. 2 consecutive DNA-binding regions (homeobox) follow at residues 304 to 363 (SSIP…GISW) and 494 to 553 (ASIY…RNLK). The tract at residues 497–555 (YKNKKSHEQLSALKGSFCRNQFPGQSEVEHLTKVTGLSTREVRKWFSDRRYHCRNLKGS) is required for nuclear localization. Disordered regions lie at residues 598 to 618 (PSAK…KYKE) and 666 to 695 (KVNA…GEED). Phosphoserine occurs at positions 599 and 604. Residues 612 to 671 (TPTKYKERAPEQLRALESSFAQNPLPLDEELDRLRSETKMTRREIDSWFSERRKKVNAEE) constitute a DNA-binding region (homeobox 3). Residues 666 to 677 (KVNAEETKKAEE) are compositionally biased toward basic and acidic residues. Residues 679–695 (ASQEEEEAAEDEGGEED) are compositionally biased toward acidic residues. Phosphoserine occurs at positions 680, 708, and 723. 2 DNA-binding regions (homeobox) span residues 764-823 (PGKV…KNGQ) and 835-894 (FPPG…TRAV). A disordered region spans residues 890 to 956 (ETRAVADTGS…PQAGRQLETD (67 aa)). 2 positions are modified to phosphoserine: serine 927 and serine 946.

It belongs to the ZHX family. As to quaternary structure, homodimer (via homeobox domain 1). Heterodimer with ZHX1 (via homeobox domain 1). Heterodimer with ZHX2 (via homeobox domain 1). Heterodimerization with ZHX1 is a prerequisite for repressor activity. Interacts with NFYA. As to expression, widely expressed. High expression in kidney. Expressed during osteogenic differentiation.

The protein resides in the nucleus. Its function is as follows. Acts as a transcriptional repressor. Involved in the early stages of mesenchymal stem cell (MSC) osteogenic differentiation. Is a regulator of podocyte gene expression during primary glomerula disease. Binds to promoter DNA. This chain is Zinc fingers and homeoboxes protein 3 (ZHX3), found in Homo sapiens (Human).